Here is a 252-residue protein sequence, read N- to C-terminus: Trans-aconitate 2-methyltransferase (252 aa).

It belongs to the methyltransferase superfamily. Tam family.

Its subcellular location is the cytoplasm. It catalyses the reaction trans-aconitate + S-adenosyl-L-methionine = (E)-3-(methoxycarbonyl)pent-2-enedioate + S-adenosyl-L-homocysteine. Functionally, catalyzes the S-adenosylmethionine monomethyl esterification of trans-aconitate. The polypeptide is Trans-aconitate 2-methyltransferase (Escherichia coli O6:H1 (strain CFT073 / ATCC 700928 / UPEC)).